The primary structure comprises 419 residues: Putative zinc metalloprotease M6_Spy1682 (419 aa).

His18 contributes to the Zn(2+) binding site. Glu19 is a catalytic residue. His22 serves as a coordination point for Zn(2+). 4 helical membrane-spanning segments follow: residues 169 to 191 (LITNFAGPMNNFILGIVVFILLV), 301 to 323 (LAWSGAFTILNALKGLITGFSLN), 343 to 365 (LESVLSLMAMLSINLGIFNLIPI), and 392 to 411 (AYITLAGVAIMVVLMIAVTW). The 100-residue stretch at 175-274 (GPMNNFILGI…LKTVAVKPQK (100 aa)) folds into the PDZ domain.

Belongs to the peptidase M50B family. Requires Zn(2+) as cofactor.

The protein resides in the cell membrane. The protein is Putative zinc metalloprotease M6_Spy1682 of Streptococcus pyogenes serotype M6 (strain ATCC BAA-946 / MGAS10394).